A 635-amino-acid chain; its full sequence is Biosynthetic arginine decarboxylase (635 aa).

N6-(pyridoxal phosphate)lysine is present on Lys-100. 282-292 (LDIGGGLGVDY) is a binding site for substrate.

It belongs to the Orn/Lys/Arg decarboxylase class-II family. SpeA subfamily. Requires Mg(2+) as cofactor. It depends on pyridoxal 5'-phosphate as a cofactor.

The catalysed reaction is L-arginine + H(+) = agmatine + CO2. Its pathway is amine and polyamine biosynthesis; agmatine biosynthesis; agmatine from L-arginine: step 1/1. Its function is as follows. Catalyzes the biosynthesis of agmatine from arginine. In Geotalea uraniireducens (strain Rf4) (Geobacter uraniireducens), this protein is Biosynthetic arginine decarboxylase.